We begin with the raw amino-acid sequence, 427 residues long: tRNA(Ile)-lysidine synthase (427 aa).

An ATP-binding site is contributed by 25 to 30 (SGGLDS).

The protein belongs to the tRNA(Ile)-lysidine synthase family.

Its subcellular location is the cytoplasm. It catalyses the reaction cytidine(34) in tRNA(Ile2) + L-lysine + ATP = lysidine(34) in tRNA(Ile2) + AMP + diphosphate + H(+). Ligates lysine onto the cytidine present at position 34 of the AUA codon-specific tRNA(Ile) that contains the anticodon CAU, in an ATP-dependent manner. Cytidine is converted to lysidine, thus changing the amino acid specificity of the tRNA from methionine to isoleucine. The protein is tRNA(Ile)-lysidine synthase of Histophilus somni (strain 2336) (Haemophilus somnus).